The following is a 173-amino-acid chain: Large ribosomal subunit protein bL9 (173 aa).

Residues 150 to 173 (KQEDKKSLSKKLNKADEQGERAEV) form a disordered region.

It belongs to the bacterial ribosomal protein bL9 family.

Functionally, binds to the 23S rRNA. This Borreliella burgdorferi (strain ZS7) (Borrelia burgdorferi) protein is Large ribosomal subunit protein bL9.